Consider the following 339-residue polypeptide: Methionine import ATP-binding protein MetN 2 (339 aa).

Residues 2-241 (ISFNNVSKVY…PKTKTTQNFV (240 aa)) form the ABC transporter domain. 38 to 45 (GFSGAGKS) contributes to the ATP binding site.

Belongs to the ABC transporter superfamily. Methionine importer (TC 3.A.1.24) family. The complex is composed of two ATP-binding proteins (MetN), two transmembrane proteins (MetI) and a solute-binding protein (MetQ).

It localises to the cell membrane. The catalysed reaction is L-methionine(out) + ATP + H2O = L-methionine(in) + ADP + phosphate + H(+). The enzyme catalyses D-methionine(out) + ATP + H2O = D-methionine(in) + ADP + phosphate + H(+). Part of the ABC transporter complex MetNIQ involved in methionine import. Responsible for energy coupling to the transport system. This chain is Methionine import ATP-binding protein MetN 2, found in Bacillus cereus (strain ATCC 10987 / NRS 248).